Here is a 570-residue protein sequence, read N- to C-terminus: RNA polymerase I termination factor (570 aa).

Residues 1–16 (MDSVSNLKSTNFQNNN) show a composition bias toward polar residues. Disordered stretches follow at residues 1 to 21 (MDSV…PKES), 37 to 68 (HIKK…DMDW), and 100 to 138 (SSMR…AKIK). A compositionally biased stretch (basic residues) spans 37-56 (HIKKTKKKLKKQKKRKHGSK). Phosphothreonine is present on Thr-64. Basic residues predominate over residues 108 to 137 (RSCHKKSSNSRSERKKHRKRKSSKERKAKI). Positions 273–339 (KFTPSEENAL…SIYKHIRRKY (67 aa)) constitute a Myb-like 1 domain. Positions 340–391 (HIFEQRGKWTPEEDQELARLCLEKEGHWTEVGKLLGRMPEDCRDRWRNYMKC) constitute an HTH myb-type domain. Positions 367 to 389 (WTEVGKLLGRMPEDCRDRWRNYM) form a DNA-binding region, H-T-H motif. 2 Myb-like domains span residues 392–486 (GSKR…NKLV) and 493–549 (SMLS…MREK).

As to quaternary structure, interacts with FOB1. Interacts with the RENT complex subunits NET1 and SIR2.

The protein resides in the nucleus. It is found in the nucleolus. Its function is as follows. DNA-binding protein that recognizes sequence-specific replication termini (Ter sites) within rDNA. Binds to rDNA terminator elements and mediates efficient RNA polymerase I transcription termination. Required for rDNA silencing at the non-transcribed spacer 1 (NTS1). Promotes the association of SIR2 with NTS1 and contributes to maintenance of rDNA stability. This chain is RNA polymerase I termination factor, found in Saccharomyces cerevisiae (strain ATCC 204508 / S288c) (Baker's yeast).